The sequence spans 152 residues: Aspartate-rich protein (152 aa).

The N-terminal stretch at 1-19 is a signal peptide; it reads MQKLLLAVLFFSLLAVATA. Basic and acidic residues predominate over residues 82 to 113; that stretch reads ATPKTEAEPGSLDKGEGTKGEKGKEGKKEKGE. The tract at residues 82 to 152 is disordered; the sequence is ATPKTEAEPG…VHENDDENED (71 aa). Residues 135–152 are compositionally biased toward acidic residues; the sequence is DDDDDRDDVHENDDENED.

In terms of tissue distribution, prismatic layer of shell (at protein level). Expressed primarily in the mantle with highest level in the mantle edge and lower level in the mantle pallium.

The protein resides in the secreted. The chain is Aspartate-rich protein from Margaritifera margaritifera (Freshwater pearl mussel).